Reading from the N-terminus, the 268-residue chain is HTH-type transcriptional activator RhaS (268 aa).

The 98-residue stretch at 171–268 (RQMIRWLENN…YSIAPRELRI (98 aa)) folds into the HTH araC/xylS-type domain. 2 consecutive DNA-binding regions (H-T-H motif) follow at residues 188-209 (EELAEKFALPIRTLHRYIKSQT) and 236-259 (IINIAYDCGFNDSSYFSTCFKNEY).

As to quaternary structure, binds DNA as a dimer.

Its subcellular location is the cytoplasm. Its function is as follows. Activates expression of the rhaBAD and rhaT operons. The protein is HTH-type transcriptional activator RhaS of Mannheimia succiniciproducens (strain KCTC 0769BP / MBEL55E).